The chain runs to 364 residues: 4-hydroxythreonine-4-phosphate dehydrogenase (364 aa).

Residues H148 and T149 each coordinate substrate. Residues H177, H216, and H301 each contribute to the a divalent metal cation site. Positions 309, 318, and 327 each coordinate substrate.

It belongs to the PdxA family. In terms of assembly, homodimer. Requires Zn(2+) as cofactor. It depends on Mg(2+) as a cofactor. The cofactor is Co(2+).

The protein resides in the cytoplasm. It carries out the reaction 4-(phosphooxy)-L-threonine + NAD(+) = 3-amino-2-oxopropyl phosphate + CO2 + NADH. It functions in the pathway cofactor biosynthesis; pyridoxine 5'-phosphate biosynthesis; pyridoxine 5'-phosphate from D-erythrose 4-phosphate: step 4/5. Its function is as follows. Catalyzes the NAD(P)-dependent oxidation of 4-(phosphooxy)-L-threonine (HTP) into 2-amino-3-oxo-4-(phosphooxy)butyric acid which spontaneously decarboxylates to form 3-amino-2-oxopropyl phosphate (AHAP). This chain is 4-hydroxythreonine-4-phosphate dehydrogenase, found in Campylobacter jejuni (strain RM1221).